A 312-amino-acid chain; its full sequence is Protein Rep40 (312 aa).

The SF3 helicase domain occupies 84–239 (DPQYAASVFL…LDHDFGKVTK (156 aa)). 110 to 117 (GPATTGKT) lines the ATP pocket. A disordered region spans residues 264–301 (KGGAKKRPAPSDADISEPKRVRESVAQPSTSDAEASIN).

Homooligomer.

Its subcellular location is the host nucleus. The catalysed reaction is ATP + H2O = ADP + phosphate + H(+). In terms of biological role, plays a critical role during packaging of viral DNA into empty capsids, where they are thought to be part of the packaging motor complex. The single stranded genomic DNA is packaged in a 3' to 5' direction and requires the association of viral DNA with Rep40. The chain is Protein Rep40 (Rep40) from Mammalia (AAV-2).